A 271-amino-acid polypeptide reads, in one-letter code: Carboxy-terminal domain RNA polymerase II polypeptide A small phosphatase 2 (271 aa).

S5 is modified (phosphoserine). The FCP1 homology domain maps to 97-255; it reads EDQGRICVVI…LNLIPIFEEL (159 aa). D107 acts as the 4-aspartylphosphate intermediate in catalysis. 3 residues coordinate Mg(2+): D107, D109, and N218. The Proton donor role is filled by D109.

As to quaternary structure, monomer. Interacts with REST. It depends on Mg(2+) as a cofactor. In terms of tissue distribution, expression is restricted to non-neuronal tissues. Highest expression in pancreas and lowest in liver.

It is found in the nucleus. It carries out the reaction O-phospho-L-seryl-[protein] + H2O = L-seryl-[protein] + phosphate. The enzyme catalyses O-phospho-L-threonyl-[protein] + H2O = L-threonyl-[protein] + phosphate. Its function is as follows. Preferentially catalyzes the dephosphorylation of 'Ser-5' within the tandem 7 residue repeats in the C-terminal domain (CTD) of the largest RNA polymerase II subunit POLR2A. Negatively regulates RNA polymerase II transcription, possibly by controlling the transition from initiation/capping to processive transcript elongation. Recruited by REST to neuronal genes that contain RE-1 elements, leading to neuronal gene silencing in non-neuronal cells. May contribute to the development of sarcomas. This is Carboxy-terminal domain RNA polymerase II polypeptide A small phosphatase 2 (CTDSP2) from Homo sapiens (Human).